We begin with the raw amino-acid sequence, 452 residues long: Rhodopsin (452 aa).

Topologically, residues 1 to 33 (MGRDIPDNETWWYNPYMDIHPHWKQFDQVPAAV) are extracellular. Residue asparagine 8 is glycosylated (N-linked (GlcNAc...) asparagine). Residues 34 to 58 (YYSLGIFIAICGIIGCVGNGVVIYL) form a helical membrane-spanning segment. Topologically, residues 59-70 (FTKTKSLQTPAN) are cytoplasmic. A helical membrane pass occupies residues 71 to 97 (MFIINLAFSDFTFSLVNGFPLMTISCF). The Extracellular segment spans residues 98–109 (MKYWVFGNAACK). Cysteine 108 and cysteine 186 are joined by a disulfide. The helical transmembrane segment at 110-131 (VYGLIGGIFGLMSIMTMTMISI) threads the bilayer. The 'Ionic lock' involved in activated form stabilization motif lies at 132–134 (DRY). Residues 132 to 151 (DRYNVIGRPMSASKKMSHRK) are Cytoplasmic-facing. A helical membrane pass occupies residues 152 to 172 (AFIMIIFVWIWSTIWAIGPIF). Residues 173-199 (GWGAYTLEGVLCNCSFDYITRDTTTRS) are Extracellular-facing. A helical transmembrane segment spans residues 200–224 (NILCMYIFAFMCPIVVIFFCYFNIV). At 225 to 261 (MSVSNHEKEMAAMAKRLNAKELRKAQAGANAEMKLAK) the chain is on the cytoplasmic side. A helical transmembrane segment spans residues 262 to 283 (ISIVIVTQFLLSWSPYAVVALL). Residues 284 to 293 (AQFGPIEWVT) are Extracellular-facing. A helical membrane pass occupies residues 294-315 (PYAAQLPVMFAKASAIHNPMIY). Lysine 305 carries the post-translational modification N6-(retinylidene)lysine. Over 316-452 (SVSHPKFRER…QGVDNQAYQA (137 aa)) the chain is Cytoplasmic. 2 S-palmitoyl cysteine lipidation sites follow: cysteine 336 and cysteine 337. Disordered stretches follow at residues 346 to 365 (DDKDAEAEIPAGEQSGGETA) and 376 to 452 (MMQK…AYQA). Residues 376–388 (MMQKMQAQQQQQP) are compositionally biased toward low complexity. Residues 389-440 (AYPPQGYPPQGYPPPPPQGYPPQGYPPQGYPPQGYPPPPQGPPPQGPPPQAA) are compositionally biased toward pro residues.

The protein belongs to the G-protein coupled receptor 1 family. Opsin subfamily. In terms of processing, contains one covalently linked retinal chromophore. Upon light absorption, the covalently bound 11-cis-retinal is converted to all-trans-retinal. After hydrolysis of the Schiff base and release of the covalently bound all-trans-retinal, active rhodopsin is regenerated by binding of a fresh molecule of 11-cis-retinal.

It localises to the cell projection. The protein localises to the rhabdomere membrane. Functionally, photoreceptor required for image-forming vision at low light intensity. Light-induced isomerization of 11-cis to all-trans retinal triggers a conformational change that activates signaling via G-proteins. Signaling mediates the activation of phospholipase C. Subsequent receptor phosphorylation mediates displacement of the bound G-protein alpha subunit by arrestin and terminates signaling. In Loligo forbesii (Veined squid), this protein is Rhodopsin (RHO).